The sequence spans 211 residues: Arginine exporter protein ArgO (211 aa).

Helical transmembrane passes span 1–21, 37–57, 68–88, 111–131, 147–167, and 179–199; these read MISY…PLGP, LMIA…GIFG, LLAL…FGAL, IIAT…DTFV, WFAL…ALLA, and AQRI…FQLA.

This sequence belongs to the LysE/ArgO transporter (TC 2.A.75) family.

Its subcellular location is the cell inner membrane. The enzyme catalyses L-arginine(in) = L-arginine(out). Its function is as follows. Involved in the export of arginine. Important to control the intracellular level of arginine and the correct balance between arginine and lysine. In Salmonella choleraesuis (strain SC-B67), this protein is Arginine exporter protein ArgO.